The chain runs to 307 residues: Nicotinamide/nicotinic acid mononucleotide adenylyltransferase 2 (307 aa).

2 residues coordinate NAD(+): S16 and F17. ATP is bound at residue H24. NAD(+)-binding residues include W92 and T95. Residues C164 and C165 are each lipidated (S-palmitoyl cysteine). Residues G200, D202, L212, W213, and R232 each coordinate NAD(+). 271-274 provides a ligand contact to ATP; that stretch reads TKSR.

This sequence belongs to the eukaryotic NMN adenylyltransferase family. As to quaternary structure, monomer. The cofactor is Mg(2+). Post-translationally, degraded in response to injured neurite. Degradation is caused by polyubiquitination by MYCBP2 after recognition by FBXO45. Palmitoylated; palmitoylation is required for membrane association.

It is found in the golgi apparatus membrane. It localises to the cytoplasmic vesicle membrane. The protein resides in the cytoplasm. The protein localises to the cell projection. Its subcellular location is the axon. It carries out the reaction beta-nicotinamide D-ribonucleotide + ATP + H(+) = diphosphate + NAD(+). The catalysed reaction is nicotinate beta-D-ribonucleotide + ATP + H(+) = deamido-NAD(+) + diphosphate. Its pathway is cofactor biosynthesis; NAD(+) biosynthesis; NAD(+) from nicotinamide D-ribonucleotide: step 1/1. It functions in the pathway cofactor biosynthesis; NAD(+) biosynthesis; deamido-NAD(+) from nicotinate D-ribonucleotide: step 1/1. Its activity is regulated as follows. Inhibited by P1-(adenosine-5')-P3-(nicotinamide-riboside-5')-triphosphate (Np3AD) and P1-(adenosine-5')-P4-(nicotinamide-riboside-5')-tetraphosphate (Np4AD). Nicotinamide/nicotinate-nucleotide adenylyltransferase that acts as an axon maintenance factor. Axon survival factor required for the maintenance of healthy axons: acts by delaying Wallerian axon degeneration, an evolutionarily conserved process that drives the loss of damaged axons. Catalyzes the formation of NAD(+) from nicotinamide mononucleotide (NMN) and ATP. Can also use the deamidated form; nicotinic acid mononucleotide (NaMN) as substrate but with a lower efficiency. Cannot use triazofurin monophosphate (TrMP) as substrate. Also catalyzes the reverse reaction, i.e. the pyrophosphorolytic cleavage of NAD(+). For the pyrophosphorolytic activity prefers NAD(+), NADH and NaAD as substrates and degrades nicotinic acid adenine dinucleotide phosphate (NHD) less effectively. Fails to cleave phosphorylated dinucleotides NADP(+), NADPH and NaADP(+). Also acts as an activator of ADP-ribosylation by supporting the catalytic activity of PARP16 and promoting mono-ADP-ribosylation of ribosomes by PARP16. May be involved in the maintenance of axonal integrity. The sequence is that of Nicotinamide/nicotinic acid mononucleotide adenylyltransferase 2 (NMNAT2) from Bos taurus (Bovine).